A 140-amino-acid polypeptide reads, in one-letter code: Transcription antitermination protein NusB (140 aa).

Belongs to the NusB family.

Its function is as follows. Involved in transcription antitermination. Required for transcription of ribosomal RNA (rRNA) genes. Binds specifically to the boxA antiterminator sequence of the ribosomal RNA (rrn) operons. In Streptococcus pneumoniae serotype 2 (strain D39 / NCTC 7466), this protein is Transcription antitermination protein NusB.